We begin with the raw amino-acid sequence, 521 residues long: (+)-kolavenyl diphosphate synthase (521 aa).

The Mg(2+) site is built by Asp-311 and Asp-313. Residues 311 to 314 (DGDD) carry the DXDD motif motif.

Belongs to the terpene synthase family. It depends on Mg(2+) as a cofactor.

The catalysed reaction is (2E,6E,10E)-geranylgeranyl diphosphate = (+)-kolavenyl diphosphate. Its function is as follows. Involved in the biosynthesis of (+)-O-methylkolavelool. Catalyzes the conversion of geranylgeranyl diphosphate into (+)-kolavenyl diphosphate. This is (+)-kolavenyl diphosphate synthase from Herpetosiphon aurantiacus (strain ATCC 23779 / DSM 785 / 114-95).